A 455-amino-acid chain; its full sequence is Chromosomal replication initiator protein DnaA (455 aa).

Positions 1-74 (MSEQEIWEKV…LYEAIGHEIA (74 aa)) are domain I, interacts with DnaA modulators. The domain II stretch occupies residues 74-116 (APVFYTEEELKSLHTSEQKEENQPEQPAKKYTPGVDEAVIGGE). Basic and acidic residues predominate over residues 85-95 (SLHTSEQKEEN). The segment at 85–104 (SLHTSEQKEENQPEQPAKKY) is disordered. Residues 117–333 (QFNTHNTFET…GALTRVLAFS (217 aa)) are domain III, AAA+ region. ATP is bound by residues glycine 161, glycine 163, lysine 164, and threonine 165. A domain IV, binds dsDNA region spans residues 334-455 (KLQGQPITTE…ENLEKEIRNQ (122 aa)).

This sequence belongs to the DnaA family. In terms of assembly, oligomerizes as a right-handed, spiral filament on DNA at oriC.

It is found in the cytoplasm. Functionally, plays an essential role in the initiation and regulation of chromosomal replication. ATP-DnaA binds to the origin of replication (oriC) to initiate formation of the DNA replication initiation complex once per cell cycle. Binds the DnaA box (a 9 base pair repeat at the origin) and separates the double-stranded (ds)DNA. Forms a right-handed helical filament on oriC DNA; dsDNA binds to the exterior of the filament while single-stranded (ss)DNA is stabiized in the filament's interior. The ATP-DnaA-oriC complex binds and stabilizes one strand of the AT-rich DNA unwinding element (DUE), permitting loading of DNA polymerase. After initiation quickly degrades to an ADP-DnaA complex that is not apt for DNA replication. Binds acidic phospholipids. This Staphylococcus saprophyticus subsp. saprophyticus (strain ATCC 15305 / DSM 20229 / NCIMB 8711 / NCTC 7292 / S-41) protein is Chromosomal replication initiator protein DnaA.